The following is a 353-amino-acid chain: uncharacterized protein (353 aa).

The signal sequence occupies residues 1–24 (MRVVKRIAVACYLGITIFSGIAFG).

This sequence belongs to the chlamydial CPn_1058/CT_355/TC_0634 family.

This is an uncharacterized protein from Chlamydia muridarum (strain MoPn / Nigg).